The following is a 185-amino-acid chain: MNITERTIQVIRNRIRSVPDYPSPGVVFRDITPLMEDGPSLHAAVDALAEATRSLDYDRVISAEARGFVFGTALAYRSRKGLVLARKPGKLPREVISVSYELEYGTDSLEVHADAIPPGTRVLVADDLLATGGTARAMCELVEKSGGSVAGCAFLIELGFLEGRKKLLAGYDVISLINYHDPAAE.

This sequence belongs to the purine/pyrimidine phosphoribosyltransferase family. In terms of assembly, homodimer.

Its subcellular location is the cytoplasm. The catalysed reaction is AMP + diphosphate = 5-phospho-alpha-D-ribose 1-diphosphate + adenine. Its pathway is purine metabolism; AMP biosynthesis via salvage pathway; AMP from adenine: step 1/1. Catalyzes a salvage reaction resulting in the formation of AMP, that is energically less costly than de novo synthesis. In Rubrobacter xylanophilus (strain DSM 9941 / JCM 11954 / NBRC 16129 / PRD-1), this protein is Adenine phosphoribosyltransferase.